The sequence spans 84 residues: Small ribosomal subunit protein uS17 (84 aa).

Belongs to the universal ribosomal protein uS17 family. As to quaternary structure, part of the 30S ribosomal subunit.

Functionally, one of the primary rRNA binding proteins, it binds specifically to the 5'-end of 16S ribosomal RNA. The protein is Small ribosomal subunit protein uS17 of Salmonella typhi.